Here is a 465-residue protein sequence, read N- to C-terminus: Pre-mRNA-splicing factor URN1 (465 aa).

The WW domain maps to 1–32 (MRGEWQEFKTPAGKKYYYNKNTKQSRWEKPNL). 3 disordered regions span residues 28–49 (EKPN…QTER), 144–198 (ERKD…VNQD), and 266–288 (ERSG…DSEV). Position 150 is a phosphoserine (S150). Over residues 160-175 (LQESHTGLVSGYGSSS) the composition is skewed to polar residues. Residues 176–192 (GEEDEEEDEEEDEENEE) show a composition bias toward acidic residues. One can recognise an FF domain in the interval 212–266 (DIDERNIFFELFDRYKLDKFSTWSLQSKKIENDPDFYKIRDDTVRESLFEEWCGE). The segment covering 274–288 (EESDSEDNSEDDSEV) has biased composition (acidic residues).

As to quaternary structure, component of the precatalytic spliceosomal complex B. Interacts with PRP19.

The protein resides in the nucleus. Functionally, component of the spliceosome involved in mRNA processing. In Saccharomyces cerevisiae (strain ATCC 204508 / S288c) (Baker's yeast), this protein is Pre-mRNA-splicing factor URN1 (URN1).